The chain runs to 92 residues: Long neurotoxin 73 (92 aa).

Residues 1–21 form the signal peptide; that stretch reads MKTLLLTLVVVTIVCLDLGDS. 5 disulfides stabilise this stretch: C24/C41, C34/C62, C47/C51, C66/C77, and C78/C83.

Belongs to the three-finger toxin family. Long-chain subfamily. Type II alpha-neurotoxin sub-subfamily. Expressed by the venom gland.

The protein localises to the secreted. Its function is as follows. Binds with high affinity to muscular (alpha-1/CHRNA1) and neuronal (alpha-7/CHRNA7) nicotinic acetylcholine receptor (nAChR) and inhibits acetylcholine from binding to the receptor, thereby impairing neuromuscular and neuronal transmission. The polypeptide is Long neurotoxin 73 (Drysdalia coronoides (White-lipped snake)).